Reading from the N-terminus, the 51-residue chain is Basic phospholipase A2 homolog BmatTX-I (51 aa).

The cysteines at positions 28 and 44 are disulfide-linked.

As to quaternary structure, monomer. As to expression, expressed by the venom gland.

The protein resides in the secreted. In terms of biological role, snake venom phospholipase A2 homolog that lacks enzymatic activity. Shows high myotoxic activity, neutrophile activation (demonstrated by activation induction of IL-1beta production), slight cytotoxicity against Jurkat (leukemia T) and SK-BR-3 (breast adenocarcinoma) tumor cell lines, and slight antiparasitic activity against promastigote forms of Leishmania amazonensis. A model of myotoxic mechanism has been proposed: an apo Lys49-PLA2 is activated by the entrance of a hydrophobic molecule (e.g. fatty acid) at the hydrophobic channel of the protein leading to a reorientation of a monomer. This reorientation causes a transition between 'inactive' to 'active' states, causing alignment of C-terminal and membrane-docking sites (MDoS) side-by-side and putting the membrane-disruption sites (MDiS) in the same plane, exposed to solvent and in a symmetric position for both monomers. The MDoS region stabilizes the toxin on membrane by the interaction of charged residues with phospholipid head groups. Subsequently, the MDiS region destabilizes the membrane with penetration of hydrophobic residues. This insertion causes a disorganization of the membrane, allowing an uncontrolled influx of ions (i.e. calcium and sodium), and eventually triggering irreversible intracellular alterations and cell death. This Bothrops mattogrossensis (Pitviper) protein is Basic phospholipase A2 homolog BmatTX-I.